A 218-amino-acid polypeptide reads, in one-letter code: Ribose-5-phosphate isomerase A (218 aa).

Residues 28–31 (TGST), 81–84 (DGAD), and 94–97 (KGGG) contribute to the substrate site. The Proton acceptor role is filled by E103. Position 121 (K121) interacts with substrate.

It belongs to the ribose 5-phosphate isomerase family. As to quaternary structure, homodimer.

It catalyses the reaction aldehydo-D-ribose 5-phosphate = D-ribulose 5-phosphate. Its pathway is carbohydrate degradation; pentose phosphate pathway; D-ribose 5-phosphate from D-ribulose 5-phosphate (non-oxidative stage): step 1/1. Its function is as follows. Catalyzes the reversible conversion of ribose-5-phosphate to ribulose 5-phosphate. The sequence is that of Ribose-5-phosphate isomerase A from Shewanella woodyi (strain ATCC 51908 / MS32).